A 122-amino-acid polypeptide reads, in one-letter code: Large ribosomal subunit protein uL14 (122 aa).

It belongs to the universal ribosomal protein uL14 family. In terms of assembly, part of the 50S ribosomal subunit. Forms a cluster with proteins L3 and L19. In the 70S ribosome, L14 and L19 interact and together make contacts with the 16S rRNA in bridges B5 and B8.

In terms of biological role, binds to 23S rRNA. Forms part of two intersubunit bridges in the 70S ribosome. This chain is Large ribosomal subunit protein uL14, found in Borrelia hermsii (strain HS1 / DAH).